Consider the following 315-residue polypeptide: MGDRTITYSPAFTLVPTYECFNRCTYCNFRQDIGTRGWLTLKAAAKQLAELDPQRVREILILSGEVAPNSPQRSKWLERLYDLAALALDQGFLPHTNAGPLTRAEMTALKAVNVSMGLMLEQLTPKLLQGVHRHAPSKDPQLRLHQLEQAGELGIPFTTGLLLGIGEAPQDWAETLTAIAEGHRRWGHIQEVILQPHSPGQQQAERLPPFDLKQLPQVVQWARSLLPEDITIQIPANLVTEPEVFRACLEAGARDLGGIVPLDHVNPDYPHTDLAVLKEQLQAWGWELVPRLPVYPQFVDWLPPPLKEKVKEIPV.

Positions 6-237 constitute a Radical SAM core domain; sequence ITYSPAFTLV…EDITIQIPAN (232 aa). [4Fe-4S] cluster is bound by residues Cys20, Cys24, and Cys27.

This sequence belongs to the radical SAM superfamily. CofG family. In terms of assembly, consists of two subunits, CofG and CofH. Requires [4Fe-4S] cluster as cofactor.

It carries out the reaction 5-amino-5-(4-hydroxybenzyl)-6-(D-ribitylimino)-5,6-dihydrouracil + S-adenosyl-L-methionine = 7,8-didemethyl-8-hydroxy-5-deazariboflavin + 5'-deoxyadenosine + L-methionine + NH4(+) + H(+). It participates in cofactor biosynthesis; coenzyme F0 biosynthesis. Functionally, catalyzes the radical-mediated synthesis of 7,8-didemethyl-8-hydroxy-5-deazariboflavin from 5-amino-5-(4-hydroxybenzyl)-6-(D-ribitylimino)-5,6-dihydrouracil. This chain is 7,8-didemethyl-8-hydroxy-5-deazariboflavin synthase, found in Thermosynechococcus vestitus (strain NIES-2133 / IAM M-273 / BP-1).